Here is a 600-residue protein sequence, read N- to C-terminus: MNKLKVTLLASSVVLAATLLSACGSNQSSSTSTKKLKAGNFDVAYQNPDKAIKGGNLKVAYQSDSPMKAQWLSGLSNDATFATMSGPGGGQDGLFFTDSGFKFIKGGAADVALDKESKTATITLRKDLKWSDGSEVTAKDYEFTYETIANPAYGSDRWTDSLANIVGLSDYHTGKAKTISGITFPDGENGKVIKVQFKEMKPGMTQSGNGYFLETVAPYQYLKDVAPKDLASSPKTTTKPLVTGPFKPENVVAGESIKYVPNPYYWGEKPKLNSITYEVVSTAKSVAALSSSKYDIINGMVSSQYKQVKNLKGYKVLGQQAMYISLMYYNLGHYDAKNSINVQDRKTPLQDQNVRQAIGYARNVAEVDNKFSNGLSTPANSLIPPIFKQFTSSSVKGYEKQDLDKANKLLDEDGWKLNKSTGYREKDGKELSLVYAARVGDANAETIAQNYIQQWKKIGVKVSLYNGKLMEFNSWVDHMTTPPGANDWDITDGSWSLASEPSQQDLFSAAAPYNFGHFNDSEITKDLNDIDSAKSENPTYRKAAFVKYQEDMNKKAYVIPTNFMLNYTPVNKRVVGMTLDYGAMNTWSEIGVSSAKLATK.

The first 22 residues, 1-22 (MNKLKVTLLASSVVLAATLLSA), serve as a signal peptide directing secretion. Residue Cys23 is the site of N-palmitoyl cysteine attachment. A lipid anchor (S-diacylglycerol cysteine) is attached at Cys23.

The protein belongs to the bacterial solute-binding protein 5 family. The complex is composed of two ATP-binding proteins (OppD and OppF), two transmembrane proteins (OppB and OppC) and a solute-binding protein (OppA).

The protein localises to the cell membrane. Its function is as follows. Part of the ABC transporter complex OppABCDF involved in the uptake of oligopeptides. Essential for uptake of peptides larger than three amino acids and for growth in milk. This is Oligopeptide-binding protein OppA from Lactococcus lactis subsp. lactis (Streptococcus lactis).